A 166-amino-acid polypeptide reads, in one-letter code: Large ribosomal subunit protein uL10 (166 aa).

This sequence belongs to the universal ribosomal protein uL10 family. As to quaternary structure, part of the ribosomal stalk of the 50S ribosomal subunit. The N-terminus interacts with L11 and the large rRNA to form the base of the stalk. The C-terminus forms an elongated spine to which L12 dimers bind in a sequential fashion forming a multimeric L10(L12)X complex.

Its function is as follows. Forms part of the ribosomal stalk, playing a central role in the interaction of the ribosome with GTP-bound translation factors. This is Large ribosomal subunit protein uL10 (rplJ) from Streptococcus pyogenes serotype M1.